The following is a 157-amino-acid chain: Type II restriction enzyme PvuII (157 aa).

D58 and E68 together coordinate Mg(2+).

In terms of assembly, homodimer. Mg(2+) is required as a cofactor.

It catalyses the reaction Endonucleolytic cleavage of DNA to give specific double-stranded fragments with terminal 5'-phosphates.. Its function is as follows. A P subtype restriction enzyme that recognizes the double-stranded sequence 5'-CAGCTG-3' and cleaves after G-3. This Proteus hauseri protein is Type II restriction enzyme PvuII (pvuIIR).